The chain runs to 373 residues: Opsin Rh1 (373 aa).

The Extracellular portion of the chain corresponds to 1-49 (MESFAVAAAQLGPHFAPLSNGSVVDKVTPDMAHLISPYWNQFPAMDPIW). N20 is a glycosylation site (N-linked (GlcNAc...) asparagine). A helical transmembrane segment spans residues 50–74 (AKILTAYMIMIGMISWCGNGVVIYI). Residues 75-86 (FATTKSLRTPAN) lie on the Cytoplasmic side of the membrane. Residues 87–112 (LLVINLAISDFGIMITNTPMMGINLY) traverse the membrane as a helical segment. The Extracellular segment spans residues 113 to 126 (FETWVLGPMMCDIY). A disulfide bridge links C123 with C200. The chain crosses the membrane as a helical span at residues 127–146 (AGLGSAFGCSSIWSMCMISL). Residues 147–165 (DRYQVIVKGMAGRPMTIPL) lie on the Cytoplasmic side of the membrane. Residues 166–189 (ALGKIAYIWFMSSIWCLAPAFGWS) traverse the membrane as a helical segment. At 190 to 213 (RYVPEGNLTSCGIDYLERDWNPRS) the chain is on the extracellular side. N196 carries N-linked (GlcNAc...) asparagine glycosylation. A helical transmembrane segment spans residues 214-241 (YLIFYSIFVYYIPLFLICYSYWFIIAAV). Over 242–276 (SAHEKAMREQAKKMNVKSLRSSEDAEKSAEGKLAK) the chain is Cytoplasmic. Residues 277 to 300 (VALVTITLWFMAWTPYLVINCMGL) form a helical membrane-spanning segment. Topologically, residues 301 to 307 (FKFEGLT) are extracellular. The chain crosses the membrane as a helical span at residues 308–332 (PLNTIWGACFAKSAACYNPIVYGIS). N6-(retinylidene)lysine is present on K319. The Cytoplasmic segment spans residues 333-373 (HPKYRLALKEKCPCCVFGKVDDGKSSDAQSQATASEAESKA). The tract at residues 354–373 (DGKSSDAQSQATASEAESKA) is disordered. Over residues 358 to 373 (SDAQSQATASEAESKA) the composition is skewed to low complexity.

This sequence belongs to the G-protein coupled receptor 1 family. Opsin subfamily. Post-translationally, phosphorylated on some or all of the serine and threonine residues present in the C-terminal region.

The protein localises to the cell projection. The protein resides in the rhabdomere membrane. Its function is as follows. Visual pigments are the light-absorbing molecules that mediate vision. They consist of an apoprotein, opsin, covalently linked to cis-retinal. This chain is Opsin Rh1 (ninaE), found in Drosophila melanogaster (Fruit fly).